The chain runs to 239 residues: ATP synthase subunit a (239 aa).

6 helical membrane-spanning segments follow: residues 31-51 (FLLQ…LGLG), 91-111 (VFPL…LGMI), 125-145 (AACA…FHGV), 151-171 (FMGP…IGHI), 194-214 (ILFF…LGLF), and 215-235 (TGFI…AGAI).

Belongs to the ATPase A chain family. As to quaternary structure, F-type ATPases have 2 components, CF(1) - the catalytic core - and CF(0) - the membrane proton channel. CF(1) has five subunits: alpha(3), beta(3), gamma(1), delta(1), epsilon(1). CF(0) has three main subunits: a(1), b(2) and c(9-12). The alpha and beta chains form an alternating ring which encloses part of the gamma chain. CF(1) is attached to CF(0) by a central stalk formed by the gamma and epsilon chains, while a peripheral stalk is formed by the delta and b chains.

It localises to the cell inner membrane. In terms of biological role, key component of the proton channel; it plays a direct role in the translocation of protons across the membrane. This Syntrophobacter fumaroxidans (strain DSM 10017 / MPOB) protein is ATP synthase subunit a.